Reading from the N-terminus, the 132-residue chain is Inclusion membrane protein E (132 aa).

Helical transmembrane passes span 41-61 (LGVVCSIICLALGIAAAAVGV) and 66-86 (FALGLGIIAILLGIVLFATSA).

Its subcellular location is the secreted. It localises to the host vacuole. The protein localises to the host pathogen-containing vacuole. It is found in the host pathogen-containing vacuole membrane. In terms of biological role, inclusion membrane protein probably involved in early modification events of the chlamydial inclusion. This is Inclusion membrane protein E from Chlamydia trachomatis serovar L2 (strain ATCC VR-902B / DSM 19102 / 434/Bu).